A 103-amino-acid polypeptide reads, in one-letter code: MYAVIKTGGKQYRVASGEKIKVEQIAADVGQEIVIDQVLAVGNGSEIKIGTPLVSGATVTVTVLSHGKHDKVGIFKMRRRKHYQKRQGHRQQFTELQIGAIAG.

It belongs to the bacterial ribosomal protein bL21 family. Part of the 50S ribosomal subunit. Contacts protein L20.

Functionally, this protein binds to 23S rRNA in the presence of protein L20. This chain is Large ribosomal subunit protein bL21, found in Variovorax paradoxus (strain S110).